The primary structure comprises 296 residues: 4-diphosphocytidyl-2-C-methyl-D-erythritol kinase (296 aa).

Residue Lys11 is part of the active site. 96–106 (PVSSGLAGGSA) is a binding site for ATP. The active site involves Asp136.

It belongs to the GHMP kinase family. IspE subfamily.

The catalysed reaction is 4-CDP-2-C-methyl-D-erythritol + ATP = 4-CDP-2-C-methyl-D-erythritol 2-phosphate + ADP + H(+). It functions in the pathway isoprenoid biosynthesis; isopentenyl diphosphate biosynthesis via DXP pathway; isopentenyl diphosphate from 1-deoxy-D-xylulose 5-phosphate: step 3/6. Its function is as follows. Catalyzes the phosphorylation of the position 2 hydroxy group of 4-diphosphocytidyl-2C-methyl-D-erythritol. The protein is 4-diphosphocytidyl-2-C-methyl-D-erythritol kinase of Anaplasma phagocytophilum (strain HZ).